A 522-amino-acid polypeptide reads, in one-letter code: MATVREKAVALDLCATYSPSQRPPGPNGSHRPFRATYIWSSIIQVLYTQVEVKKRRHHLKYHHDCFIGSEAVDVVFAHLVQHKYFGDMDIPRSKVVRVCQALMDCKVFEPIVTACMFGREKKRTVFEDSSCSLYRFLNSSNLLGVQVEKSNGRCTPQRPKHSSFQSASLQSPSLEDLWDNLSLTPADPTHINLTSNLPPKVVAEVWQEQTIRRLLQLVDLPLLDSLLEYTPVAPRIPNVKEEDHNLTSNYLDREILKAFSDAQADEWVSAAVDCLDFLPDHMVVDVSRNLPEQQAPDSKWKLLLFDTIGKHYSQNRAPLLRNQLFDIHTGIAELLVNGKTEPALEATQLCLKLLDSPSREEFRRLLYFMALAADPSEFRLNEETDNRMTVKRMFCRAIVNNKSLSKGKCDLLVLFILDHHKDVFKIPGSLHKMVSDKLVAIQQGTDPDRDTGYTFCQRVDKREFDSAAQNNTRTELCALLKTIYENNSLSPKEKKRLLGQFYKSHPETFIQYFGDRVSSVYT.

Residues 46–138 (LYTQVEVKKR…SSCSLYRFLN (93 aa)) enclose the DEP domain.

The protein belongs to the DEPDC7 family.

The sequence is that of DEP domain-containing protein 7 (depdc7) from Xenopus laevis (African clawed frog).